A 378-amino-acid polypeptide reads, in one-letter code: MAKRDYYEVLGVAKNASDDEIKKAYRKLAMKYHPDRNPDSKDAEEHFKEAKEAYEMLSDGQKRAAYDQYGHAGVDPNMGGAGAQGFGGFADAFGDIFGDIFGQAAGGAARGGRGGPQVYRGADLRYSMEITLEQAAHGYDTQIRVPSWVSCEVCHGSGAKPGTKPETCPTCHGQGTVRMSQGFFSIQQTCPKCHGTGTYIPEPCAHCHGSGKVKETKTLEVKIPAGIDDGMRIRSAGNGEPGINGGPPGDLYVEIHIKPHSVFERDGDDLHCQMPIPFTTAALGGEIEVPTLAGRASFPVPEGTQSGKTFRLRGKGIKGLRSSIAGDLYVHVQVETPVKLTDQQRDLLKQFEKSLAEGGARHSPQSKSWFDRVKSFFE.

The J domain maps to aspartate 5 to glycine 70. Residues glycine 138–threonine 216 form a CR-type zinc finger. Zn(2+)-binding residues include cysteine 151, cysteine 154, cysteine 168, cysteine 171, cysteine 190, cysteine 193, cysteine 204, and cysteine 207. CXXCXGXG motif repeat units follow at residues cysteine 151 to glycine 158, cysteine 168 to glycine 175, cysteine 190 to glycine 197, and cysteine 204 to glycine 211.

Belongs to the DnaJ family. In terms of assembly, homodimer. It depends on Zn(2+) as a cofactor.

It localises to the cytoplasm. Its function is as follows. Participates actively in the response to hyperosmotic and heat shock by preventing the aggregation of stress-denatured proteins and by disaggregating proteins, also in an autonomous, DnaK-independent fashion. Unfolded proteins bind initially to DnaJ; upon interaction with the DnaJ-bound protein, DnaK hydrolyzes its bound ATP, resulting in the formation of a stable complex. GrpE releases ADP from DnaK; ATP binding to DnaK triggers the release of the substrate protein, thus completing the reaction cycle. Several rounds of ATP-dependent interactions between DnaJ, DnaK and GrpE are required for fully efficient folding. Also involved, together with DnaK and GrpE, in the DNA replication of plasmids through activation of initiation proteins. In Burkholderia cenocepacia (strain HI2424), this protein is Chaperone protein DnaJ.